Consider the following 234-residue polypeptide: 7-cyano-7-deazaguanine synthase (234 aa).

8-18 (FSGGQDSTTCA) serves as a coordination point for ATP. Positions 194, 202, 205, and 208 each coordinate Zn(2+).

This sequence belongs to the QueC family. Zn(2+) serves as cofactor.

It carries out the reaction 7-carboxy-7-deazaguanine + NH4(+) + ATP = 7-cyano-7-deazaguanine + ADP + phosphate + H2O + H(+). It participates in purine metabolism; 7-cyano-7-deazaguanine biosynthesis. Functionally, catalyzes the ATP-dependent conversion of 7-carboxy-7-deazaguanine (CDG) to 7-cyano-7-deazaguanine (preQ(0)). The chain is 7-cyano-7-deazaguanine synthase from Gloeobacter violaceus (strain ATCC 29082 / PCC 7421).